A 226-amino-acid polypeptide reads, in one-letter code: Acyl-protein thioesterase 1 homolog 1 (226 aa).

Residues Ser121, Asp174, and His206 each act as charge relay system in the active site.

This sequence belongs to the AB hydrolase superfamily. AB hydrolase 2 family.

It localises to the cytoplasm. Its subcellular location is the nucleus. It catalyses the reaction S-hexadecanoyl-L-cysteinyl-[protein] + H2O = L-cysteinyl-[protein] + hexadecanoate + H(+). Its function is as follows. Hydrolyzes fatty acids from S-acylated cysteine residues in proteins with a strong preference for palmitoylated G-alpha proteins over other acyl substrates. Mediates the deacylation of G-alpha proteins such as GPA1 in vivo, but has weak or no activity toward palmitoylated Ras proteins. Has weak lysophospholipase activity in vitro; however such activity may not exist in vivo. The polypeptide is Acyl-protein thioesterase 1 homolog 1 (Dictyostelium discoideum (Social amoeba)).